The following is a 353-amino-acid chain: Ribosomal RNA small subunit methyltransferase H (353 aa).

S-adenosyl-L-methionine contacts are provided by residues 49-51 (GGH), D68, F95, D126, and Q133.

The protein belongs to the methyltransferase superfamily. RsmH family.

It localises to the cytoplasm. The enzyme catalyses cytidine(1402) in 16S rRNA + S-adenosyl-L-methionine = N(4)-methylcytidine(1402) in 16S rRNA + S-adenosyl-L-homocysteine + H(+). In terms of biological role, specifically methylates the N4 position of cytidine in position 1402 (C1402) of 16S rRNA. The sequence is that of Ribosomal RNA small subunit methyltransferase H from Corynebacterium urealyticum (strain ATCC 43042 / DSM 7109).